Consider the following 476-residue polypeptide: MVLINRVNIQPEELPLLYHVNSMDVYNLLQDIGSSKIIIDLRTKEQYEKNHIRTSVNIPPPPSTTPLYENGEIKEFNLSKYIGSNVTAKHWNLIFQKLIVYSDKPFLYNIDELEKTISTTTITTTATTTTTTTTTSNSIGSDQDIIKSLKVSDWDKVVLRHFLLKKKKTKVIIYQGGFDQFQKDYSFMCNPSSSPSSSSGGGGGSQLYPSEIIKDFLYLGGAENAGNRQQLINLKITHLVNMAGELDDVYPHLYKYYRANLDDRPKANIYEHFEPVIQFINDCKKQGGRVLIHCAMGISRSTTVVLAYLMKEDHMTYSDAFTFCKQKRSCINPNFGFVKQLKDYQQHLTLEWEKQEKLKKQQQQTLNINNNNTGIPLSKKLQLDVSDPLSNSSPSSPLISSTLPIPETPPAIILKNEVASPCPIKTTTSSTTINNKGQQQDKAQEEKDSIFSYADKQEKMTHPTLHSPIELPQSSL.

The Rhodanese domain occupies 32–190; that stretch reads IGSSKIIIDL…FQKDYSFMCN (159 aa). Positions 208-350 constitute a Tyrosine-protein phosphatase domain; it reads YPSEIIKDFL…LKDYQQHLTL (143 aa). Residue cysteine 294 is the Phosphocysteine intermediate of the active site. Low complexity predominate over residues 425 to 436; that stretch reads KTTTSSTTINNK. A disordered region spans residues 425–476; sequence KTTTSSTTINNKGQQQDKAQEEKDSIFSYADKQEKMTHPTLHSPIELPQSSL. The span at 442–461 shows a compositional bias: basic and acidic residues; sequence KAQEEKDSIFSYADKQEKMT.

Belongs to the protein-tyrosine phosphatase family. Non-receptor class dual specificity subfamily.

The catalysed reaction is O-phospho-L-tyrosyl-[protein] + H2O = L-tyrosyl-[protein] + phosphate. It catalyses the reaction O-phospho-L-seryl-[protein] + H2O = L-seryl-[protein] + phosphate. The enzyme catalyses O-phospho-L-threonyl-[protein] + H2O = L-threonyl-[protein] + phosphate. In terms of biological role, has a dual specificity toward Ser/Thr and Tyr-containing proteins. This Dictyostelium discoideum (Social amoeba) protein is Probable rhodanese domain-containing dual specificity protein phosphatase.